We begin with the raw amino-acid sequence, 457 residues long: tRNA-2-methylthio-N(6)-dimethylallyladenosine synthase (457 aa).

The region spanning 3-120 (KKVYVKTFGC…LPQMIDQRRA (118 aa)) is the MTTase N-terminal domain. Cys-12, Cys-49, Cys-83, Cys-157, Cys-161, and Cys-164 together coordinate [4Fe-4S] cluster. A Radical SAM core domain is found at 143 to 377 (RVEGPSAFVS…QATIEENVAR (235 aa)). In terms of domain architecture, TRAM spans 380–447 (RSMVGKVERI…PHSLRGELLL (68 aa)).

This sequence belongs to the methylthiotransferase family. MiaB subfamily. In terms of assembly, monomer. It depends on [4Fe-4S] cluster as a cofactor.

It is found in the cytoplasm. It catalyses the reaction N(6)-dimethylallyladenosine(37) in tRNA + (sulfur carrier)-SH + AH2 + 2 S-adenosyl-L-methionine = 2-methylsulfanyl-N(6)-dimethylallyladenosine(37) in tRNA + (sulfur carrier)-H + 5'-deoxyadenosine + L-methionine + A + S-adenosyl-L-homocysteine + 2 H(+). Functionally, catalyzes the methylthiolation of N6-(dimethylallyl)adenosine (i(6)A), leading to the formation of 2-methylthio-N6-(dimethylallyl)adenosine (ms(2)i(6)A) at position 37 in tRNAs that read codons beginning with uridine. In Burkholderia ambifaria (strain ATCC BAA-244 / DSM 16087 / CCUG 44356 / LMG 19182 / AMMD) (Burkholderia cepacia (strain AMMD)), this protein is tRNA-2-methylthio-N(6)-dimethylallyladenosine synthase.